Reading from the N-terminus, the 485-residue chain is MEDQLSFFPGGLRVMPVDGDTKNTRTATKTLSTLHYSLVATHTTASAGLCTLSSDNMTDVQTVLCDVKKVVSSGFDFRRVVETEHHIPVIYLLSTTEPEQMVAGEDTEFLNHLLLKATYIVRKPLDQATMAQLWRVVAWRRCCLEERIPRDSMDDIAAHAGVVGKDGNDNDVIIIEEPQVHFKVVRSRGSRKRQLTINVDSGSSDGADANPRQKLEHKKDAKGPLGQHVASHLQPQEYCTKQQKDLDERRLLSLDSLFLKAILSTLNVSLCNPLILTVPAAFTPQDGMTMNKDKAPMIELPFGLPVDDFLVGQTAYGSAGPSIGAPDDNDDDAAMYAYTSALNNNAAVGSLMVPPIESTFTIIDPIVGTKGEGSVPVVVVSEDQNNAVAAIEATAPNNAELFMMPEQVAVDAPVDVEEGIMFSLESLLGLDEDMIPMEDAGGEATDDSLNIKEGGMEIGWDLDLDYILMNNTNEFAFLDDMAWIE.

One can recognise a Response regulatory domain in the interval 13–138 (RVMPVDGDTK…TMAQLWRVVA (126 aa)). Asp66 is modified (4-aspartylphosphate). Positions 195–204 (LTINVDSGSS) are enriched in polar residues. The disordered stretch occupies residues 195–236 (LTINVDSGSSDGADANPRQKLEHKKDAKGPLGQHVASHLQPQ). Over residues 211–222 (PRQKLEHKKDAK) the composition is skewed to basic and acidic residues.

It belongs to the ARR family. Type-B subfamily. Post-translationally, two-component system major event consists of a His-to-Asp phosphorelay between a sensor histidine kinase (HK) and a response regulator (RR). In plants, the His-to-Asp phosphorelay involves an additional intermediate named Histidine-containing phosphotransfer protein (HPt). This multistep phosphorelay consists of a His-Asp-His-Asp sequential transfer of a phosphate group between first a His and an Asp of the HK protein, followed by the transfer to a conserved His of the HPt protein and finally the transfer to an Asp in the receiver domain of the RR protein.

Functionally, functions as a response regulator involved in His-to-Asp phosphorelay signal transduction system. Phosphorylation of the Asp residue in the receiver domain activates the ability of the protein to promote the transcription of target genes. May directly activate some type-A response regulators in response to cytokinins. The chain is Two-component response regulator ORR31 from Oryza sativa subsp. japonica (Rice).